Reading from the N-terminus, the 306-residue chain is Palmitoyl-protein thioesterase ABHD10, mitochondrial (306 aa).

The transit peptide at 1-52 directs the protein to the mitochondrion; sequence MAVARLAAVAAWVPCRSWGWAAVPFGPHRGLSVLLARIPQRAPRWLPACRQK. Residues 78-178 form the AB hydrolase-1 domain; it reads IIFIPGYLSY…VVALIGVATA (101 aa). Catalysis depends on charge relay system residues S152, D249, and H279.

Belongs to the AB hydrolase superfamily.

It localises to the mitochondrion. The enzyme catalyses S-hexadecanoyl-L-cysteinyl-[protein] + H2O = L-cysteinyl-[protein] + hexadecanoate + H(+). It carries out the reaction mycophenolic acid O-acyl-beta-D-glucuronide + H2O = mycophenolate + D-glucuronate + H(+). With respect to regulation, inhibited by palmostatin-B. Functionally, acts as an acyl-protein thioesterase that hydrolyzes fatty acids from acylated residues in proteins. Regulates the mitochondrial S-depalmitoylation of the nucleophilic active site residue of peroxiredoxin-5/PRDX5, a key antioxidant protein, therefore modulating mitochondrial antioxidant ability. Also catalyzes the deglucuronidation of mycophenolic acid acyl-glucuronide, an active metabolite of the immunosuppressant drug mycophenolate. This Homo sapiens (Human) protein is Palmitoyl-protein thioesterase ABHD10, mitochondrial.